The primary structure comprises 220 residues: 7-cyano-7-deazaguanine synthase (220 aa).

10-20 (FSGGQDSTTCL) is an ATP binding site. Residues Cys186, Cys195, Cys198, and Cys201 each contribute to the Zn(2+) site.

Belongs to the QueC family. As to quaternary structure, homodimer. It depends on Zn(2+) as a cofactor.

It catalyses the reaction 7-carboxy-7-deazaguanine + NH4(+) + ATP = 7-cyano-7-deazaguanine + ADP + phosphate + H2O + H(+). It functions in the pathway purine metabolism; 7-cyano-7-deazaguanine biosynthesis. In terms of biological role, catalyzes the ATP-dependent conversion of 7-carboxy-7-deazaguanine (CDG) to 7-cyano-7-deazaguanine (preQ(0)). This chain is 7-cyano-7-deazaguanine synthase, found in Bacillus mycoides (strain KBAB4) (Bacillus weihenstephanensis).